Here is a 258-residue protein sequence, read N- to C-terminus: MKTPNAQEAEGQQTRAAAGRATGSANMTKKKVSQKKQRGRPSSQPRRNIVGCRISHGWKEGDEPITQWKGTVLDQVPINPSLYLVKYDGIDCVYGLELHRDERVLSLKILSDRVASSHISDANLANTIIGKAVEHMFEGEHGSKDEWRGMVLAQAPIMKAWFYITYEKDPVLYMYQLLDDYKEGDLRIMPESSESPPTEREPGGVVDGLIGKHVEYTKEDGSKRIGMVIHQVETKPSVYFIKFDDDFHIYVYDLVKKS.

The segment covering 1-23 (MKTPNAQEAEGQQTRAAAGRATG) has biased composition (low complexity). A disordered region spans residues 1–49 (MKTPNAQEAEGQQTRAAAGRATGSANMTKKKVSQKKQRGRPSSQPRRNI). A compositionally biased stretch (basic residues) spans 28 to 39 (TKKKVSQKKQRG). 3 tudor-like domain regions span residues 50–99 (VGCR…LELH), 129–178 (IGKA…YQLL), and 210–255 (IGKH…YDLV). Histone H3K4me3 and H3R8me2a binding regions lie at residues E138 and 246–248 (DFH).

The protein belongs to the SPIN/STSY family. In terms of assembly, interacts with C11orf84/SPINDOC.

It is found in the nucleus. Functionally, may be involved in the regulation of cell cycle progression. Exhibits H3K4me3-binding activity. The polypeptide is Spindlin-2A (SPIN2A) (Homo sapiens (Human)).